Here is a 172-residue protein sequence, read N- to C-terminus: Galectin-related protein (172 aa).

The residue at position 2 (A2) is an N-acetylalanine. S22 and S25 each carry phosphoserine. In terms of domain architecture, Galectin spans 39–168 (PFCGHIKGGM…TIKINGDLQI (130 aa)).

As to quaternary structure, monomer.

In terms of biological role, does not bind lactose, and may not bind carbohydrates. In Homo sapiens (Human), this protein is Galectin-related protein (LGALSL).